A 443-amino-acid chain; its full sequence is MFLPQEIIRKKRNGEALSTQEIQFFVQGITNNTIGEGQIAALAMAVYFKDMTMDERVALTCAMRDSGMVLTWDHLNLGGPIVDKHSTGGVGDVVSLMLGPMVAACGGFVPMISGRGLGHTGGTLDKLDAIPGYQTSVDNDRFLKVVKEAGVAIIGQTGDLAPADKRIYAVRDITATVESIAMITGSILSKKLASGLEALVMDVKVGSGAFMPTFEASEELAKSIVAVANGAGCRTSALLTDMNQVLASSAGNAVEVREAVRYLTGEYRNPRIHAVTMALCAEMLISAGLASDDGEARRKLQAVLDNGKAAEIFGRMVTGLGGPSDFMERYDHHLPKAAIVRPVYAANSGFVTAMDTRELGLAVVAMGGGRRAAGDKLDYAVGLTDFIRLGQSVEADKPLALIHAQTEEQFAQAASMVQAAVKIGDTRPEALPEVYRRIGLADL.

This sequence belongs to the thymidine/pyrimidine-nucleoside phosphorylase family. Homodimer.

It catalyses the reaction thymidine + phosphate = 2-deoxy-alpha-D-ribose 1-phosphate + thymine. The protein operates within pyrimidine metabolism; dTMP biosynthesis via salvage pathway; dTMP from thymine: step 1/2. The enzymes which catalyze the reversible phosphorolysis of pyrimidine nucleosides are involved in the degradation of these compounds and in their utilization as carbon and energy sources, or in the rescue of pyrimidine bases for nucleotide synthesis. The polypeptide is Thymidine phosphorylase (Aeromonas hydrophila subsp. hydrophila (strain ATCC 7966 / DSM 30187 / BCRC 13018 / CCUG 14551 / JCM 1027 / KCTC 2358 / NCIMB 9240 / NCTC 8049)).